The primary structure comprises 334 residues: N-acetyl-gamma-glutamyl-phosphate reductase (334 aa).

The active site involves C154.

This sequence belongs to the NAGSA dehydrogenase family. Type 1 subfamily.

It is found in the cytoplasm. It carries out the reaction N-acetyl-L-glutamate 5-semialdehyde + phosphate + NADP(+) = N-acetyl-L-glutamyl 5-phosphate + NADPH + H(+). It participates in amino-acid biosynthesis; L-arginine biosynthesis; N(2)-acetyl-L-ornithine from L-glutamate: step 3/4. Functionally, catalyzes the NADPH-dependent reduction of N-acetyl-5-glutamyl phosphate to yield N-acetyl-L-glutamate 5-semialdehyde. This is N-acetyl-gamma-glutamyl-phosphate reductase from Buchnera aphidicola subsp. Acyrthosiphon pisum (strain Tuc7).